Reading from the N-terminus, the 151-residue chain is Regulatory protein RecX (151 aa).

This sequence belongs to the RecX family.

It is found in the cytoplasm. Modulates RecA activity. The sequence is that of Regulatory protein RecX from Prosthecochloris aestuarii (strain DSM 271 / SK 413).